A 498-amino-acid polypeptide reads, in one-letter code: RuvB-like helicase 2 (498 aa).

79-86 (GPPSTGKT) is an ATP binding site. The disordered stretch occupies residues 458–498 (VTIGQESTDGSTQPQAKQQEVAQPEATQPQSQPEDDKMETD). The span at 461–489 (GQESTDGSTQPQAKQQEVAQPEATQPQSQ) shows a compositional bias: polar residues.

Belongs to the RuvB family. May form heterododecamers with RVB1. Component of the SWR1 chromatin remodeling complex, the INO80 chromatin remodeling complex, and of the R2TP complex.

Its subcellular location is the nucleus. It catalyses the reaction ATP + H2O = ADP + phosphate + H(+). In terms of biological role, DNA helicase which participates in several chromatin remodeling complexes, including the SWR1 and the INO80 complexes. The SWR1 complex mediates the ATP-dependent exchange of histone H2A for the H2A variant HZT1 leading to transcriptional regulation of selected genes by chromatin remodeling. The INO80 complex remodels chromatin by shifting nucleosomes and is involved in DNA repair. Also involved in pre-rRNA processing. This is RuvB-like helicase 2 (RVB2) from Candida albicans (strain SC5314 / ATCC MYA-2876) (Yeast).